We begin with the raw amino-acid sequence, 218 residues long: PKHD-type hydroxylase IL0759 (218 aa).

Positions 76-170 (QVARVTINRY…RLAMIGWVQS (95 aa)) constitute a Fe2OG dioxygenase domain. The Fe cation site is built by histidine 94, aspartate 96, and histidine 151. Arginine 161 lines the 2-oxoglutarate pocket.

Requires Fe(2+) as cofactor. The cofactor is L-ascorbate.

The protein is PKHD-type hydroxylase IL0759 of Idiomarina loihiensis (strain ATCC BAA-735 / DSM 15497 / L2-TR).